Consider the following 128-residue polypeptide: V-type proton ATPase subunit F (128 aa).

Belongs to the V-ATPase F subunit family. In terms of assembly, V-ATPase is a heteromultimeric enzyme composed of a peripheral catalytic V1 complex (components A to H) attached to an integral membrane V0 proton pore complex (components: a, c, c'', d and e).

It localises to the vacuole membrane. In terms of biological role, subunit of the peripheral V1 complex of vacuolar ATPase essential for assembly or catalytic function. V-ATPase is responsible for acidifying a variety of intracellular compartments in eukaryotic cells. The polypeptide is V-type proton ATPase subunit F (VHA-F) (Arabidopsis thaliana (Mouse-ear cress)).